A 452-amino-acid chain; its full sequence is tRNA-2-methylthio-N(6)-dimethylallyladenosine synthase (452 aa).

An MTTase N-terminal domain is found at 5–121 (RRYHITTFGC…LADLLAQVEA (117 aa)). [4Fe-4S] cluster-binding residues include Cys14, Cys50, Cys84, Cys156, Cys160, and Cys163. The region spanning 142–379 (RDSTITAWVN…NHLVAQMAAD (238 aa)) is the Radical SAM core domain. Positions 382-446 (QRYLGRTEEV…AFSLTGQILS (65 aa)) constitute a TRAM domain.

It belongs to the methylthiotransferase family. MiaB subfamily. As to quaternary structure, monomer. [4Fe-4S] cluster serves as cofactor.

It localises to the cytoplasm. It carries out the reaction N(6)-dimethylallyladenosine(37) in tRNA + (sulfur carrier)-SH + AH2 + 2 S-adenosyl-L-methionine = 2-methylsulfanyl-N(6)-dimethylallyladenosine(37) in tRNA + (sulfur carrier)-H + 5'-deoxyadenosine + L-methionine + A + S-adenosyl-L-homocysteine + 2 H(+). Its function is as follows. Catalyzes the methylthiolation of N6-(dimethylallyl)adenosine (i(6)A), leading to the formation of 2-methylthio-N6-(dimethylallyl)adenosine (ms(2)i(6)A) at position 37 in tRNAs that read codons beginning with uridine. The protein is tRNA-2-methylthio-N(6)-dimethylallyladenosine synthase of Synechococcus elongatus (strain ATCC 33912 / PCC 7942 / FACHB-805) (Anacystis nidulans R2).